The primary structure comprises 218 residues: Adenylate kinase (218 aa).

10 to 15 contributes to the ATP binding site; that stretch reads GAGKGT. The NMP stretch occupies residues 30–59; the sequence is STGDMLRAAVKAGTPLGIEAKKVMDAGGLV. Residues threonine 31, arginine 36, 57–59, 85–88, and glutamine 92 each bind AMP; these read GLV and GFPR. Residues 122–159 are LID; sequence GRRSHAASGRTYHVKFNPPKVAGVDDVTGEPLIQRDDD. ATP is bound by residues arginine 123 and 132–133; that span reads TY. Residues arginine 156 and arginine 167 each coordinate AMP. Glycine 203 lines the ATP pocket.

It belongs to the adenylate kinase family. In terms of assembly, monomer.

It localises to the cytoplasm. It catalyses the reaction AMP + ATP = 2 ADP. It participates in purine metabolism; AMP biosynthesis via salvage pathway; AMP from ADP: step 1/1. In terms of biological role, catalyzes the reversible transfer of the terminal phosphate group between ATP and AMP. Plays an important role in cellular energy homeostasis and in adenine nucleotide metabolism. This chain is Adenylate kinase, found in Albidiferax ferrireducens (strain ATCC BAA-621 / DSM 15236 / T118) (Rhodoferax ferrireducens).